The following is a 114-amino-acid chain: Large ribosomal subunit protein uL18 (114 aa).

The protein belongs to the universal ribosomal protein uL18 family. In terms of assembly, part of the 50S ribosomal subunit; part of the 5S rRNA/L5/L18/L25 subcomplex. Contacts the 5S and 23S rRNAs.

This is one of the proteins that bind and probably mediate the attachment of the 5S RNA into the large ribosomal subunit, where it forms part of the central protuberance. The polypeptide is Large ribosomal subunit protein uL18 (Azobacteroides pseudotrichonymphae genomovar. CFP2).